A 206-amino-acid chain; its full sequence is Carbonic anhydrase (206 aa).

K11 is covalently cross-linked (Isoglutamyl lysine isopeptide (Lys-Gln) (interchain with Q-Cter in protein Pup)). Zn(2+) is bound by residues C51, D53, H104, and C107.

The protein belongs to the beta-class carbonic anhydrase family. In terms of assembly, homotetramer. Zn(2+) serves as cofactor.

It carries out the reaction hydrogencarbonate + H(+) = CO2 + H2O. Functionally, catalyzes the reversible hydration of carbon dioxide to form bicarbonate. This is Carbonic anhydrase (cynT) from Mycolicibacterium smegmatis (strain ATCC 700084 / mc(2)155) (Mycobacterium smegmatis).